We begin with the raw amino-acid sequence, 932 residues long: uncharacterized protein (932 aa).

Disordered regions lie at residues 26–120 (NINN…NMLT), 158–289 (MGIG…EEKK), 304–617 (NNNN…INHD), 635–720 (QQSQ…PPLV), and 802–863 (SVSS…FPLE). Composition is skewed to low complexity over residues 41 to 105 (NNNI…IISS) and 163 to 241 (NNNN…YGNN). Residues 242-253 (TPVNYIHNNSTP) show a composition bias toward polar residues. Positions 265–285 (SDEEDSVLYSSDDSEESDYEE) are enriched in acidic residues. The span at 304 to 475 (NNNNINNNNM…NNNNNNNNNN (172 aa)) shows a compositional bias: low complexity. 2 stretches are compositionally biased toward polar residues: residues 476–492 (ENYV…NTES) and 527–540 (DIPN…TKQQ). Residues 548–590 (SPVYSPPNNLSPLSSPYLHHNSNNNSNNGGGNSNNNNTNFNYG) are compositionally biased toward low complexity. The span at 606 to 617 (GERDPPHVINHD) shows a compositional bias: basic and acidic residues. 3 stretches are compositionally biased toward low complexity: residues 635 to 666 (QQSQ…PSSS), 696 to 707 (SPPNTSISSLSS), and 813 to 853 (NSSN…NNNS). Over residues 854–863 (EPKKPKFPLE) the composition is skewed to basic and acidic residues.

This is an uncharacterized protein from Dictyostelium discoideum (Social amoeba).